We begin with the raw amino-acid sequence, 299 residues long: tRNA dimethylallyltransferase (299 aa).

13–20 (GPTASGKT) serves as a coordination point for ATP. A substrate-binding site is contributed by 15 to 20 (TASGKT). Residues 38–41 (DSRQ) are interaction with substrate tRNA.

It belongs to the IPP transferase family. In terms of assembly, monomer. Mg(2+) is required as a cofactor.

The catalysed reaction is adenosine(37) in tRNA + dimethylallyl diphosphate = N(6)-dimethylallyladenosine(37) in tRNA + diphosphate. Catalyzes the transfer of a dimethylallyl group onto the adenine at position 37 in tRNAs that read codons beginning with uridine, leading to the formation of N6-(dimethylallyl)adenosine (i(6)A). This is tRNA dimethylallyltransferase from Synechococcus sp. (strain CC9605).